The chain runs to 584 residues: Segmentation polarity homeobox protein engrailed (584 aa).

Disordered regions lie at residues 1 to 27 (MALE…PQQH), 141 to 198 (EESD…SKPS), 343 to 380 (IGQA…SSST), 392 to 451 (CSSA…GGKN), and 465 to 492 (DRPS…PRTA). A compositionally biased stretch (pro residues) spans 12-23 (APSPPGCLPHSP). Over residues 160 to 174 (TEEDEEEDDDIDVDD) the composition is skewed to acidic residues. Over residues 189–198 (HQQSKQSKPS) the composition is skewed to polar residues. Low complexity-rich tracts occupy residues 348 to 380 (STTP…SSST) and 392 to 405 (CSSA…SPSS). Positions 478–489 (QPKDKTNDEKRP) are enriched in basic and acidic residues. Positions 486-545 (EKRPRTAFSSEQLARLKREFNENRYLTERRRQQLSSELGLNEAQIKIWFQNKRAKIKKST) form a DNA-binding region, homeobox.

It belongs to the engrailed homeobox family.

The protein resides in the nucleus. This protein specifies the body segmentation pattern. It is required for the development of the central nervous system. Transcriptional regulator that repress activated promoters. The chain is Segmentation polarity homeobox protein engrailed (en) from Drosophila virilis (Fruit fly).